A 205-amino-acid polypeptide reads, in one-letter code: Putative 3-methyladenine DNA glycosylase (205 aa).

Belongs to the DNA glycosylase MPG family.

In Bacillus cereus (strain Q1), this protein is Putative 3-methyladenine DNA glycosylase.